The sequence spans 238 residues: ATP synthase subunit a (238 aa).

The next 5 membrane-spanning stretches (helical) occupy residues 18 to 38 (MSTVLMTTIACLIVFLITFIG), 76 to 96 (FIVLAYALLFYVFVANMLGLP), 117 to 137 (VLTLTMAAFVVILTHYYGIKI), 195 to 215 (LIGMFGAFLPLIVWQAFGLFI), and 216 to 236 (GAIQAYIFAMLAMVYMAHKVE).

The protein belongs to the ATPase A chain family. As to quaternary structure, F-type ATPases have 2 components, CF(1) - the catalytic core - and CF(0) - the membrane proton channel. CF(1) has five subunits: alpha(3), beta(3), gamma(1), delta(1), epsilon(1). CF(0) has three main subunits: a(1), b(2) and c(9-12). The alpha and beta chains form an alternating ring which encloses part of the gamma chain. CF(1) is attached to CF(0) by a central stalk formed by the gamma and epsilon chains, while a peripheral stalk is formed by the delta and b chains.

It localises to the cell membrane. Key component of the proton channel; it plays a direct role in the translocation of protons across the membrane. In Alkalihalophilus pseudofirmus (strain ATCC BAA-2126 / JCM 17055 / OF4) (Bacillus pseudofirmus), this protein is ATP synthase subunit a.